Here is a 263-residue protein sequence, read N- to C-terminus: Protein MARD1 (263 aa).

An FLZ-type zinc finger spans residues serine 219–threonine 263.

This sequence belongs to the FLZ family. As to quaternary structure, interacts with KIN10 and KIN11 via its FLZ-type zinc finger domain. Interacts with KINB1 and KINB2 via its N-terminal part. Interacts with TZF4, TZF5 and TZF6. Interacts with MPK3 and MPK6.

Its subcellular location is the cytoplasm. It is found in the stress granule. The protein resides in the P-body. Its function is as follows. May act as an adapter to facilitate the interaction of SnRK1 complex with effector proteins, conferring tissue- and stimulus-type specific differences in the SnRK1 regulation pathway. Involved in seed dormancy control. The chain is Protein MARD1 from Arabidopsis thaliana (Mouse-ear cress).